We begin with the raw amino-acid sequence, 419 residues long: Glucose-1-phosphate adenylyltransferase (419 aa).

Alpha-D-glucose 1-phosphate-binding positions include Tyr-106, Gly-171, 186 to 187, and Ser-204; that span reads EK.

It belongs to the bacterial/plant glucose-1-phosphate adenylyltransferase family. Homotetramer.

It carries out the reaction alpha-D-glucose 1-phosphate + ATP + H(+) = ADP-alpha-D-glucose + diphosphate. The protein operates within glycan biosynthesis; glycogen biosynthesis. Its function is as follows. Involved in the biosynthesis of ADP-glucose, a building block required for the elongation reactions to produce glycogen. Catalyzes the reaction between ATP and alpha-D-glucose 1-phosphate (G1P) to produce pyrophosphate and ADP-Glc. The sequence is that of Glucose-1-phosphate adenylyltransferase from Roseobacter denitrificans (strain ATCC 33942 / OCh 114) (Erythrobacter sp. (strain OCh 114)).